Reading from the N-terminus, the 235-residue chain is 2-C-methyl-D-erythritol 4-phosphate cytidylyltransferase (235 aa).

It belongs to the IspD/TarI cytidylyltransferase family. IspD subfamily. As to quaternary structure, homodimer.

The catalysed reaction is 2-C-methyl-D-erythritol 4-phosphate + CTP + H(+) = 4-CDP-2-C-methyl-D-erythritol + diphosphate. It participates in isoprenoid biosynthesis; isopentenyl diphosphate biosynthesis via DXP pathway; isopentenyl diphosphate from 1-deoxy-D-xylulose 5-phosphate: step 2/6. Catalyzes the formation of 4-diphosphocytidyl-2-C-methyl-D-erythritol from CTP and 2-C-methyl-D-erythritol 4-phosphate (MEP). This Serratia proteamaculans (strain 568) protein is 2-C-methyl-D-erythritol 4-phosphate cytidylyltransferase.